The chain runs to 406 residues: COP9 signalosome complex subunit 4 (406 aa).

The residue at position 2 (Ala-2) is an N-acetylalanine. At Lys-25 the chain carries N6-acetyllysine. Positions 197-366 (YRRKFIEAAQ…GIVHFETREA (170 aa)) constitute a PCI domain.

Belongs to the CSN4 family. As to quaternary structure, component of the CSN complex, composed of COPS1/GPS1, COPS2, COPS3, COPS4, COPS5, COPS6, COPS7 (COPS7A or COPS7B), COPS8 and COPS9. In the complex, it probably interacts directly with COPS1, COPS2, COPS3, COPS5, COPS6, COPS7 (COPS7A or COPS7B) and COPS8. Interacts with TOR1A; the interaction is direct and associates TOR1A and SNAPIN with the CSN complex. Interacts with STON2; controls STON2 neddylation levels. Interacts with ERCC6.

The protein resides in the cytoplasm. Its subcellular location is the nucleus. It localises to the cytoplasmic vesicle. It is found in the secretory vesicle. The protein localises to the synaptic vesicle. Functionally, component of the COP9 signalosome complex (CSN), a complex involved in various cellular and developmental processes. The CSN complex is an essential regulator of the ubiquitin (Ubl) conjugation pathway by mediating the deneddylation of the cullin subunits of SCF-type E3 ligase complexes, leading to decrease the Ubl ligase activity of SCF-type complexes such as SCF, CSA or DDB2. Also involved in the deneddylation of non-cullin subunits such as STON2. The complex is also involved in phosphorylation of p53/TP53, c-jun/JUN, IkappaBalpha/NFKBIA, ITPK1, IRF8/ICSBP and SNAPIN, possibly via its association with CK2 and PKD kinases. CSN-dependent phosphorylation of TP53 and JUN promotes and protects degradation by the Ubl system, respectively. In Bos taurus (Bovine), this protein is COP9 signalosome complex subunit 4 (COPS4).